The primary structure comprises 311 residues: GTPase Era (311 aa).

The 168-residue stretch at 18–185 folds into the Era-type G domain; it reads RSGFVALIGA…AKYLAESVPN (168 aa). A G1 region spans residues 26 to 33; the sequence is GAPNAGKS. 26–33 is a GTP binding site; that stretch reads GAPNAGKS. The interval 52 to 56 is G2; it reads QTTRA. The segment at 73–76 is G3; that stretch reads DTPG. Residues 73-77 and 135-138 contribute to the GTP site; these read DTPGI and NKVD. Positions 135-138 are G4; sequence NKVD. Residues 164–166 form a G5 region; sequence ISA. The region spanning 216–293 is the KH type-2 domain; it reads LHEELPYAST…HQFLFVKVRE (78 aa).

Belongs to the TRAFAC class TrmE-Era-EngA-EngB-Septin-like GTPase superfamily. Era GTPase family. Monomer.

The protein resides in the cytoplasm. It localises to the cell inner membrane. Functionally, an essential GTPase that binds both GDP and GTP, with rapid nucleotide exchange. Plays a role in 16S rRNA processing and 30S ribosomal subunit biogenesis and possibly also in cell cycle regulation and energy metabolism. This chain is GTPase Era, found in Brucella melitensis biotype 1 (strain ATCC 23456 / CCUG 17765 / NCTC 10094 / 16M).